A 434-amino-acid polypeptide reads, in one-letter code: Ribosomal protein uS12 methylthiotransferase RimO (434 aa).

The MTTase N-terminal domain occupies 9–125; sequence PAIFLLSLGC…VLAAIGAKYR (117 aa). [4Fe-4S] cluster is bound by residues Cys-18, Cys-54, Cys-88, Cys-149, Cys-153, and Cys-156. Residues 135–364 form the Radical SAM core domain; that stretch reads LTPPHYAFLK…MELQEGISAS (230 aa). Residues 367 to 434 enclose the TRAM domain; sequence RKLEGQTLKV…AYELFGRISG (68 aa).

The protein belongs to the methylthiotransferase family. RimO subfamily. Requires [4Fe-4S] cluster as cofactor.

The protein localises to the cytoplasm. It carries out the reaction L-aspartate(89)-[ribosomal protein uS12]-hydrogen + (sulfur carrier)-SH + AH2 + 2 S-adenosyl-L-methionine = 3-methylsulfanyl-L-aspartate(89)-[ribosomal protein uS12]-hydrogen + (sulfur carrier)-H + 5'-deoxyadenosine + L-methionine + A + S-adenosyl-L-homocysteine + 2 H(+). Catalyzes the methylthiolation of an aspartic acid residue of ribosomal protein uS12. The chain is Ribosomal protein uS12 methylthiotransferase RimO from Chlorobaculum tepidum (strain ATCC 49652 / DSM 12025 / NBRC 103806 / TLS) (Chlorobium tepidum).